A 100-amino-acid polypeptide reads, in one-letter code: NAD(P)H-quinone oxidoreductase subunit 4L, chloroplastic (100 aa).

The next 3 membrane-spanning stretches (helical) occupy residues 1 to 21 (MLEH…YGLI), 31 to 51 (ICLE…SDFF), and 60 to 80 (IFAI…LAIL).

This sequence belongs to the complex I subunit 4L family. In terms of assembly, NDH is composed of at least 16 different subunits, 5 of which are encoded in the nucleus.

It is found in the plastid. It localises to the chloroplast thylakoid membrane. It carries out the reaction a plastoquinone + NADH + (n+1) H(+)(in) = a plastoquinol + NAD(+) + n H(+)(out). The catalysed reaction is a plastoquinone + NADPH + (n+1) H(+)(in) = a plastoquinol + NADP(+) + n H(+)(out). In terms of biological role, NDH shuttles electrons from NAD(P)H:plastoquinone, via FMN and iron-sulfur (Fe-S) centers, to quinones in the photosynthetic chain and possibly in a chloroplast respiratory chain. The immediate electron acceptor for the enzyme in this species is believed to be plastoquinone. Couples the redox reaction to proton translocation, and thus conserves the redox energy in a proton gradient. This chain is NAD(P)H-quinone oxidoreductase subunit 4L, chloroplastic, found in Trachelium caeruleum (Blue throatwort).